A 63-amino-acid chain; its full sequence is Large ribosomal subunit protein bL28 (63 aa).

Belongs to the bacterial ribosomal protein bL28 family.

The polypeptide is Large ribosomal subunit protein bL28 (Alkaliphilus metalliredigens (strain QYMF)).